Here is a 192-residue protein sequence, read N- to C-terminus: Group XIIA secretory phospholipase A2 (192 aa).

A signal peptide spans 1-25 (MVTPRPAPARSPALLLLLLLATARG). Residues Gly-91, Pro-93, and Phe-95 each coordinate Ca(2+). The active site involves His-113. Asp-114 contributes to the Ca(2+) binding site. Residue Asp-128 is part of the active site.

Belongs to the phospholipase A2 family. Ca(2+) serves as cofactor.

It localises to the secreted. It is found in the cytoplasm. The catalysed reaction is a 1,2-diacyl-sn-glycero-3-phosphocholine + H2O = a 1-acyl-sn-glycero-3-phosphocholine + a fatty acid + H(+). PA2 catalyzes the calcium-dependent hydrolysis of the 2-acyl groups in 3-sn-phosphoglycerides. Does not exhibit detectable activity toward sn-2-arachidonoyl- or linoleoyl-phosphatidylcholine or -phosphatidylethanolamine. This is Group XIIA secretory phospholipase A2 (Pla2g12a) from Mus musculus (Mouse).